Here is a 201-residue protein sequence, read N- to C-terminus: Small ribosomal subunit protein uS4 (201 aa).

The region spanning Ser91–Val157 is the S4 RNA-binding domain.

Belongs to the universal ribosomal protein uS4 family. In terms of assembly, part of the 30S ribosomal subunit. Contacts protein S5. The interaction surface between S4 and S5 is involved in control of translational fidelity.

In terms of biological role, one of the primary rRNA binding proteins, it binds directly to 16S rRNA where it nucleates assembly of the body of the 30S subunit. Its function is as follows. With S5 and S12 plays an important role in translational accuracy. This Mycobacterium leprae (strain Br4923) protein is Small ribosomal subunit protein uS4.